Consider the following 875-residue polypeptide: GATOR2 complex protein MIOS (875 aa).

7 WD repeats span residues 58-100 (SDTP…NSKF), 111-155 (KHAR…TPDI), 182-221 (GQND…QKMF), 223-261 (NTKA…KPVL), 265-306 (EQPK…TPIG), 320-360 (PCDN…SLAW), and 395-437 (RLRA…KQYT). The C4-type zinc-finger motif lies at 735–781 (VSCNFCGKSISYSCSSVPHQGRGFSQYGVSGSPTKSKVTSCPGCRKP). 2 residues coordinate Zn(2+): Cys737 and Cys740. Phosphoserine occurs at positions 759 and 766. Zn(2+) contacts are provided by Cys775, Cys778, Cys788, Cys827, Cys830, His832, His835, His838, Cys849, Cys854, and Cys858. The RING-type; atypical zinc finger occupies 782–863 (LPRCALCLIN…CTCKCMQLDT (82 aa)).

This sequence belongs to the WD repeat mio family. Component of the GATOR2 subcomplex, composed of MIOS, SEC13, SEH1L, WDR24 and WDR59. The GATOR2 complex interacts with CASTOR1 and CASTOR2; the interaction is negatively regulated by arginine. CASTOR1 and CASTOR2 convey leucine availability via direct interaction with MIOS. The GATOR2 complex interacts with SESN1, SESN2 and SESN3; the interaction is negatively regulated by amino acids. Interacts with SAR1A and SAR1B; the interaction is direct, disrupted by leucine and mediates the interaction of SAR1A or SAR1B with the GATOR2 complex to negatively regulate the TORC1 signaling upon leucine deprivation. Widely expressed. In brain, expressed in neurons and glia (oligodendrocytes and astrocytes), with more abundance in neurons.

It is found in the lysosome membrane. Its activity is regulated as follows. The GATOR2 complex is negatively regulated by the upstream amino acid sensors CASTOR1 and SESN2, which sequester the GATOR2 complex in absence of amino acids. In the presence of abundant amino acids, GATOR2 is released from CASTOR1 and SESN2 and activated. Its function is as follows. As a component of the GATOR2 complex, functions as an activator of the amino acid-sensing branch of the mTORC1 signaling pathway. The GATOR2 complex indirectly activates mTORC1 through the inhibition of the GATOR1 subcomplex. GATOR2 probably acts as an E3 ubiquitin-protein ligase toward GATOR1. In the presence of abundant amino acids, the GATOR2 complex mediates ubiquitination of the NPRL2 core component of the GATOR1 complex, leading to GATOR1 inactivation. In the absence of amino acids, GATOR2 is inhibited, activating the GATOR1 complex. Within the GATOR2 complex, MIOS is required to prevent autoubiquitination of WDR24, the catalytic subunit of the complex. The GATOR2 complex is required for brain myelination. In Mus musculus (Mouse), this protein is GATOR2 complex protein MIOS.